A 181-amino-acid chain; its full sequence is ADP-ribosylation factor 1 (181 aa).

A lipid anchor (N-myristoyl glycine) is attached at Gly-2. Residues Leu-25 to Thr-32, Thr-48, Gly-70, Asn-126 to Asp-129, and Ala-160 to Thr-161 each bind GTP. A Glycyl lysine isopeptide (Lys-Gly) (interchain with G-Cter in ubiquitin) cross-link involves residue Lys-127.

Belongs to the small GTPase superfamily. Arf family. As to quaternary structure, interacts with RUD3. Interacts with VPS13 (via C-terminal part); the interaction is direct.

Its subcellular location is the golgi apparatus. The catalysed reaction is GTP + H2O = GDP + phosphate + H(+). In terms of biological role, GTP-binding protein involved in Golgi vesicle trafficking. May modulate vesicle budding and uncoating within the Golgi apparatus. May recruit the lipid transfer protein VPS13 to Golgi membranes. Recruits polyadenylate-binding protein PAB1 to COPI vesicles, and this is required for correct localization of the asymmetrically distributed ASH1 mRNA. In Saccharomyces cerevisiae (strain ATCC 204508 / S288c) (Baker's yeast), this protein is ADP-ribosylation factor 1 (ARF1).